Consider the following 404-residue polypeptide: Ribosomal RNA large subunit methyltransferase F (404 aa).

Basic residues-rich tracts occupy residues 1-10 and 18-29; these read MTKHSQKQNR and QTRRKKPAGKLK. 3 disordered regions span residues 1-54, 156-177, and 289-308; these read MTKH…HERN, GTRQ…QRYK, and RAAK…PDAN. Positions 30 to 54 are enriched in basic and acidic residues; the sequence is AKSEAKLDTRGKPETTEKKGLHERN. Polar residues predominate over residues 157 to 172; sequence TRQNVPYASKPESSAP.

It belongs to the methyltransferase superfamily. METTL16/RlmF family.

The protein resides in the cytoplasm. The enzyme catalyses adenosine(1618) in 23S rRNA + S-adenosyl-L-methionine = N(6)-methyladenosine(1618) in 23S rRNA + S-adenosyl-L-homocysteine + H(+). Its function is as follows. Specifically methylates the adenine in position 1618 of 23S rRNA. The chain is Ribosomal RNA large subunit methyltransferase F from Shewanella sediminis (strain HAW-EB3).